A 255-amino-acid chain; its full sequence is 1-(5-phosphoribosyl)-5-[(5-phosphoribosylamino)methylideneamino] imidazole-4-carboxamide isomerase (255 aa).

The active-site Proton acceptor is D8. D129 acts as the Proton donor in catalysis.

It belongs to the HisA/HisF family.

Its subcellular location is the cytoplasm. It catalyses the reaction 1-(5-phospho-beta-D-ribosyl)-5-[(5-phospho-beta-D-ribosylamino)methylideneamino]imidazole-4-carboxamide = 5-[(5-phospho-1-deoxy-D-ribulos-1-ylimino)methylamino]-1-(5-phospho-beta-D-ribosyl)imidazole-4-carboxamide. Its pathway is amino-acid biosynthesis; L-histidine biosynthesis; L-histidine from 5-phospho-alpha-D-ribose 1-diphosphate: step 4/9. This is 1-(5-phosphoribosyl)-5-[(5-phosphoribosylamino)methylideneamino] imidazole-4-carboxamide isomerase from Prochlorococcus marinus (strain MIT 9303).